We begin with the raw amino-acid sequence, 286 residues long: Acetyl-coenzyme A carboxylase carboxyl transferase subunit beta (286 aa).

Residues 23 to 286 (IWVKCNNCNQ…ITNKPEPKKE (264 aa)) form the CoA carboxyltransferase N-terminal domain. 4 residues coordinate Zn(2+): Cys-27, Cys-30, Cys-46, and Cys-49. The segment at 27–49 (CNNCNQMIYKIELEKNLEVCPKC) adopts a C4-type zinc-finger fold.

The protein belongs to the AccD/PCCB family. As to quaternary structure, acetyl-CoA carboxylase is a heterohexamer composed of biotin carboxyl carrier protein (AccB), biotin carboxylase (AccC) and two subunits each of ACCase subunit alpha (AccA) and ACCase subunit beta (AccD). Requires Zn(2+) as cofactor.

The protein resides in the cytoplasm. It carries out the reaction N(6)-carboxybiotinyl-L-lysyl-[protein] + acetyl-CoA = N(6)-biotinyl-L-lysyl-[protein] + malonyl-CoA. Its pathway is lipid metabolism; malonyl-CoA biosynthesis; malonyl-CoA from acetyl-CoA: step 1/1. In terms of biological role, component of the acetyl coenzyme A carboxylase (ACC) complex. Biotin carboxylase (BC) catalyzes the carboxylation of biotin on its carrier protein (BCCP) and then the CO(2) group is transferred by the transcarboxylase to acetyl-CoA to form malonyl-CoA. The chain is Acetyl-coenzyme A carboxylase carboxyl transferase subunit beta from Wigglesworthia glossinidia brevipalpis.